The primary structure comprises 434 residues: UDP-glucose 6-dehydrogenase (434 aa).

Residues Asn-2 to Met-19, Val-11, Asp-30, Lys-35, Thr-121, and Glu-152 each bind NAD(+). Residues Glu-148–Glu-152, Lys-204, Asn-208, Phe-249–Gly-253, and Gly-257 each bind substrate. Cys-260 functions as the Nucleophile in the catalytic mechanism. Position 263 (Lys-263) interacts with NAD(+). Lys-321 is a substrate binding site. Arg-328 contributes to the NAD(+) binding site.

The protein belongs to the UDP-glucose/GDP-mannose dehydrogenase family.

It catalyses the reaction UDP-alpha-D-glucose + 2 NAD(+) + H2O = UDP-alpha-D-glucuronate + 2 NADH + 3 H(+). The protein operates within nucleotide-sugar biosynthesis; UDP-alpha-D-glucuronate biosynthesis; UDP-alpha-D-glucuronate from UDP-alpha-D-glucose: step 1/1. The chain is UDP-glucose 6-dehydrogenase (udg) from Rickettsia bellii (strain RML369-C).